The following is a 579-amino-acid chain: Potassium-transporting ATPase potassium-binding subunit (579 aa).

Helical transmembrane passes span 2–22 (MNLVLQYGLYILILVVLAIPL), 66–86 (SFSVLAFSIISLIVLFLIHIF), 135–155 (GLTVQNFVSAAVGISVLFALI), 177–197 (VLYILIPLSIVVSLALVSQGV), 262–282 (LSNLFEMISLLLIPVALCFTF), 292–312 (GIAIFIAMGIMLVVAMGIIGV), 391–411 (VFGGVGCGLYGMIGFAILAVF), 437–457 (VLVCLATPIAILIGSGIASIL), 490–510 (FAGFAANTPFINISIGLSMLF), and 546–566 (FIGLLIFVVLLIGALSFFPAL).

It belongs to the KdpA family. The system is composed of three essential subunits: KdpA, KdpB and KdpC.

It localises to the cell membrane. Part of the high-affinity ATP-driven potassium transport (or Kdp) system, which catalyzes the hydrolysis of ATP coupled with the electrogenic transport of potassium into the cytoplasm. This subunit binds the extracellular potassium ions and delivers the ions to the membrane domain of KdpB through an intramembrane tunnel. This chain is Potassium-transporting ATPase potassium-binding subunit, found in Clostridium botulinum (strain Alaska E43 / Type E3).